Consider the following 45-residue polypeptide: Large ribosomal subunit protein bL34 (45 aa).

The disordered stretch occupies residues 1–45 (MTKRTFQPNNRRRARKHGFRARMRTRAGRAILSARRGKNRAELSA). Residues 10 to 27 (NRRRARKHGFRARMRTRA) are compositionally biased toward basic residues.

The protein belongs to the bacterial ribosomal protein bL34 family.

The polypeptide is Large ribosomal subunit protein bL34 (Micrococcus luteus (strain ATCC 4698 / DSM 20030 / JCM 1464 / CCM 169 / CCUG 5858 / IAM 1056 / NBRC 3333 / NCIMB 9278 / NCTC 2665 / VKM Ac-2230) (Micrococcus lysodeikticus)).